A 531-amino-acid chain; its full sequence is Flavin-containing monooxygenase 3 (531 aa).

Residues 9–13, E32, 40–41, and 61–62 contribute to the FAD site; these read GAGVS, LW, and NS. Residues 60-61 and 195-198 each bind NADP(+); these read TN and SGCD. S401 carries the phosphoserine modification. Residues 511–531 form a helical membrane-spanning segment; sequence YSHFLRLLAVPVLIALFLVLI.

Belongs to the FMO family. The cofactor is FAD. As to expression, detected in liver and kidney (at protein level). Expressed in kidney and liver. Weakly expressed in lung. Does not seem to be expressed in brain, adipose tissue, or muscle.

It localises to the microsome membrane. The protein localises to the endoplasmic reticulum membrane. The enzyme catalyses trimethylamine + NADPH + O2 = trimethylamine N-oxide + NADP(+) + H2O. The catalysed reaction is N,N-dimethylaniline + NADPH + O2 + H(+) = N,N-dimethylaniline N-oxide + NADP(+) + H2O. It carries out the reaction hypotaurine + NADPH + O2 + H(+) = taurine + NADP(+) + H2O. It catalyses the reaction (S)-nicotine + NADPH + O2 = trans-(S)-nicotine N(1')-oxide + NADP(+) + H2O. The enzyme catalyses albendazole + NADPH + O2 + H(+) = albendazole S-oxide + NADP(+) + H2O. Functionally, essential hepatic enzyme that catalyzes the oxygenation of a wide variety of nitrogen- and sulfur-containing compounds including drugs as well as dietary compounds. Plays an important role in the metabolism of trimethylamine (TMA), via the production of trimethylamine N-oxide (TMAO) metabolite. TMA is generated by the action of gut microbiota using dietary precursors such as choline, choline containing compounds, betaine or L-carnitine. By regulating TMAO concentration, FMO3 directly impacts both platelet responsiveness and rate of thrombus formation. The polypeptide is Flavin-containing monooxygenase 3 (Fmo3) (Rattus norvegicus (Rat)).